A 495-amino-acid chain; its full sequence is MAMDTFPFQWPMDPAASSGLDAGFLPPPAAVAPDDGVGYYDPPAGADVDAAALPEFAAAFPPCAPDAAAAVLAMRREEEEVAGIRLVHLLMSCAGAIEAGDHALASAQLADSHAALAAVSAASGIGRVAVHFTTALSRRLFPSPVAPPTTDAEHAFLYHHFYEACPYLKFAHFTANQAILEAFHGCDHVHVIDFSLMQGLQWPALIQALALRPGGPPFLRITGIGPPSPTGRDELRDVGLRLADLARSVRVRFSFRGVAANSLDEVRPWMLQIAPGEAVAFNSVLQLHRLLGDPADQAPIDAVLDCVASVRPKIFTVIEQEADHNKTGFLDRFTEALFYYSAVFDSLDAASASGGAGNAMAEAYLQREICDIVCGEGAARRERHEPLSRWRDRLTRAGLSAVPLGSNALRQARMLVGLFSGEGHSVEEADGCLTLGWHGRPLFSASAWEAAGDGGGDNNNNSNSNVSGSSGSDSNNSGSSNGKSSGARDGSSVCL.

One can recognise a GRAS domain in the interval 77–449 (EEEEVAGIRL…RPLFSASAWE (373 aa)). The tract at residues 84-140 (IRLVHLLMSCAGAIEAGDHALASAQLADSHAALAAVSAASGIGRVAVHFTTALSRRL) is leucine repeat I (LRI). The VHIID stretch occupies residues 158–223 (YHHFYEACPY…GGPPFLRITG (66 aa)). Positions 189–193 (VHVID) match the VHIID motif. Positions 237–269 (DVGLRLADLARSVRVRFSFRGVAANSLDEVRPW) are leucine repeat II (LRII). The tract at residues 279–371 (VAFNSVLQLH…EAYLQREICD (93 aa)) is PFYRE. Positions 287 to 291 (LHRLL) match the LXXLL motif motif. Positions 374–449 (CGEGAARRER…RPLFSASAWE (76 aa)) are SAW. Residues 451 to 495 (AGDGGGDNNNNSNSNVSGSSGSDSNNSGSSNGKSSGARDGSSVCL) form a disordered region. Over residues 458-485 (NNNNSNSNVSGSSGSDSNNSGSSNGKSS) the composition is skewed to low complexity.

It belongs to the GRAS family. As to expression, expressed in elongating internodes and flowers. Expressed in floral meristem, stamen primordia and tapetum in developing anthers. Expressed at low levels in roots, shoot apices and rachis.

Its subcellular location is the nucleus. Functionally, probable transcriptional regulator that acts as a repressor of the gibberellin (GA) signaling pathway. Its repressive activity is weaker than that of SLR1. Its overexpression prevents the GA signaling pathway and induces a dwarf phenotype. This Oryza sativa subsp. japonica (Rice) protein is Protein SLENDER RICE1-LIKE 1.